The primary structure comprises 261 residues: MEMO1 family protein AF_2310 (261 aa).

Belongs to the MEMO1 family.

In Archaeoglobus fulgidus (strain ATCC 49558 / DSM 4304 / JCM 9628 / NBRC 100126 / VC-16), this protein is MEMO1 family protein AF_2310.